We begin with the raw amino-acid sequence, 223 residues long: Small ribosomal subunit protein uS3 (223 aa).

Residues 38–106 (LKAELKEKLK…EVYIDIQEVH (69 aa)) form the KH type-2 domain.

It belongs to the universal ribosomal protein uS3 family. Part of the 30S ribosomal subunit. Forms a tight complex with proteins S10 and S14.

Its function is as follows. Binds the lower part of the 30S subunit head. Binds mRNA in the 70S ribosome, positioning it for translation. This chain is Small ribosomal subunit protein uS3, found in Koribacter versatilis (strain Ellin345).